The sequence spans 237 residues: Cysteine-rich venom protein DIS3 (237 aa).

The N-terminal stretch at 1–18 (MFVFILLSLAAVLQQSFG) is a signal peptide. Positions 37–165 (VDKHNAFRRS…SYDYFYVCQY (129 aa)) constitute an SCP domain. Cystine bridges form between Cys-74–Cys-152, Cys-91–Cys-166, Cys-147–Cys-163, Cys-185–Cys-192, Cys-188–Cys-197, Cys-201–Cys-234, and Cys-219–Cys-232. A ShKT domain is found at 201 to 234 (CSREDVFTNCKSLVAKSNCQDDYIRKNCLATCFC).

The protein belongs to the CRISP family. Expressed by the venom gland.

It is found in the secreted. Weakly blocks contraction of smooth muscle elicited by high potassium-induced depolarization, but does not block caffeine-stimulated contraction. May target voltage-gated calcium channels on smooth muscle. The sequence is that of Cysteine-rich venom protein DIS3 from Dispholidus typus (Boomslang).